Reading from the N-terminus, the 353-residue chain is Rhodopsin (353 aa).

Residues 1–36 (MNGTEGENFYIPFSNKTGLARSPFEYPQYYLAEPWK) lie on the Extracellular side of the membrane. Residues N2 and N15 are each glycosylated (N-linked (GlcNAc...) asparagine). Residues 37-61 (YSVLAAYMFFLILVGFPVNFLTLFV) form a helical membrane-spanning segment. The Cytoplasmic portion of the chain corresponds to 62–73 (TVQHKKLRTPLN). The chain crosses the membrane as a helical span at residues 74–96 (YILLNLAVANLFMVLFGFTLTMY). Topologically, residues 97–110 (SSMNGYFVFGPTMC) are extracellular. C110 and C187 are oxidised to a cystine. Residues 111-133 (NFEGFFATLGGEMSLWSLVVLAI) traverse the membrane as a helical segment. The 'Ionic lock' involved in activated form stabilization signature appears at 134-136 (ERY). Residues 134 to 152 (ERYIVICKPMGNFRFGSTH) lie on the Cytoplasmic side of the membrane. A helical membrane pass occupies residues 153–173 (AYMGVAFTWFMALSCAAPPLV). Residues 174 to 202 (GWSRYLPEGMQCSCGPDYYTLNPNFNNES) lie on the Extracellular side of the membrane. The chain crosses the membrane as a helical span at residues 203 to 224 (FVIYMFLVHFIIPFIVIFFCYG). At 225–252 (RLLCTVKEAAAAQQESASTQKAEKEVTR) the chain is on the cytoplasmic side. The chain crosses the membrane as a helical span at residues 253 to 274 (MVVLMVIGFLVCWVPYASVAFY). Topologically, residues 275-286 (IFTHQGSDFGAT) are extracellular. The chain crosses the membrane as a helical span at residues 287-308 (FMTVPAFFAKTSALYNPIIYIL). K296 carries the N6-(retinylidene)lysine modification. The Cytoplasmic portion of the chain corresponds to 309 to 353 (MNKQFRNCMITTLCCGKNPLGDEDSGASTSKTEVSSVSTSQVSPA). Residues 330–353 (DEDSGASTSKTEVSSVSTSQVSPA) are disordered. Low complexity predominate over residues 336-353 (STSKTEVSSVSTSQVSPA).

The protein belongs to the G-protein coupled receptor 1 family. Opsin subfamily. Post-translationally, phosphorylated on some or all of the serine and threonine residues present in the C-terminal region. In terms of processing, contains one covalently linked retinal chromophore.

Its subcellular location is the membrane. The protein resides in the cell projection. The protein localises to the cilium. It is found in the photoreceptor outer segment. Its function is as follows. Photoreceptor required for image-forming vision at low light intensity. While most salt water fish species use retinal as chromophore, most freshwater fish use 3-dehydroretinal, or a mixture of retinal and 3-dehydroretinal. Light-induced isomerization of 11-cis to all-trans retinal triggers a conformational change that activates signaling via G-proteins. Subsequent receptor phosphorylation mediates displacement of the bound G-protein alpha subunit by arrestin and terminates signaling. In Petromyzon marinus (Sea lamprey), this protein is Rhodopsin (RHO).